The primary structure comprises 418 residues: Serine hydroxymethyltransferase (418 aa).

Residues Leu121 and Gly125 to Leu127 contribute to the (6S)-5,6,7,8-tetrahydrofolate site. Lys230 is subject to N6-(pyridoxal phosphate)lysine. Position 356 to 358 (Ser356 to Phe358) interacts with (6S)-5,6,7,8-tetrahydrofolate.

It belongs to the SHMT family. Homodimer. Pyridoxal 5'-phosphate serves as cofactor.

It localises to the cytoplasm. The catalysed reaction is (6R)-5,10-methylene-5,6,7,8-tetrahydrofolate + glycine + H2O = (6S)-5,6,7,8-tetrahydrofolate + L-serine. The protein operates within one-carbon metabolism; tetrahydrofolate interconversion. It participates in amino-acid biosynthesis; glycine biosynthesis; glycine from L-serine: step 1/1. Functionally, catalyzes the reversible interconversion of serine and glycine with tetrahydrofolate (THF) serving as the one-carbon carrier. This reaction serves as the major source of one-carbon groups required for the biosynthesis of purines, thymidylate, methionine, and other important biomolecules. Also exhibits THF-independent aldolase activity toward beta-hydroxyamino acids, producing glycine and aldehydes, via a retro-aldol mechanism. This is Serine hydroxymethyltransferase from Shewanella woodyi (strain ATCC 51908 / MS32).